The following is a 76-amino-acid chain: Large ribosomal subunit protein uL29 (76 aa).

It belongs to the universal ribosomal protein uL29 family.

The sequence is that of Large ribosomal subunit protein uL29 from Corynebacterium efficiens (strain DSM 44549 / YS-314 / AJ 12310 / JCM 11189 / NBRC 100395).